The sequence spans 271 residues: Bifunctional protein FolD (271 aa).

Residues G154–S156, S181, and I222 each bind NADP(+).

The protein belongs to the tetrahydrofolate dehydrogenase/cyclohydrolase family. In terms of assembly, homodimer.

It catalyses the reaction (6R)-5,10-methylene-5,6,7,8-tetrahydrofolate + NADP(+) = (6R)-5,10-methenyltetrahydrofolate + NADPH. It carries out the reaction (6R)-5,10-methenyltetrahydrofolate + H2O = (6R)-10-formyltetrahydrofolate + H(+). It participates in one-carbon metabolism; tetrahydrofolate interconversion. In terms of biological role, catalyzes the oxidation of 5,10-methylenetetrahydrofolate to 5,10-methenyltetrahydrofolate and then the hydrolysis of 5,10-methenyltetrahydrofolate to 10-formyltetrahydrofolate. The protein is Bifunctional protein FolD of Thermotoga petrophila (strain ATCC BAA-488 / DSM 13995 / JCM 10881 / RKU-1).